Consider the following 441-residue polypeptide: ATP-dependent RNA helicase sub2 (441 aa).

The span at 19–29 shows a compositional bias: low complexity; the sequence is DAAATTAAPAA. Positions 19–43 are disordered; sequence DAAATTAAPAANGAQDKKGDLTVSG. The Q motif signature appears at 58-86; it reads TGFRDFLLKGELLRAITDCGFEHPSEVQQ. Residues 89–264 enclose the Helicase ATP-binding domain; sequence IPTAILNVDV…KKFMRNPLEV (176 aa). Residue 102–109 coordinates ATP; it reads AKSGLGKT. The DEAD box signature appears at 211–214; the sequence is DECD. The Helicase C-terminal domain occupies 276-437; that stretch reads GLQQYYIKLS…EYPEGGVDSS (162 aa).

It belongs to the DEAD box helicase family. DECD subfamily.

The protein resides in the nucleus. It carries out the reaction ATP + H2O = ADP + phosphate + H(+). In terms of biological role, ATP-binding RNA helicase involved in transcription elongation and required for the export of mRNA out of the nucleus. SUB2 also plays a role in pre-mRNA splicing and spliceosome assembly. May be involved in rDNA and telomeric silencing, and maintenance of genome integrity. The chain is ATP-dependent RNA helicase sub2 (sub2) from Neosartorya fischeri (strain ATCC 1020 / DSM 3700 / CBS 544.65 / FGSC A1164 / JCM 1740 / NRRL 181 / WB 181) (Aspergillus fischerianus).